Consider the following 483-residue polypeptide: 23S rRNA (uracil(1939)-C(5))-methyltransferase RlmD (483 aa).

Residues 1 to 11 (MTGLGKRRPAR) are compositionally biased toward basic residues. The interval 1-36 (MTGLGKRRPARSRSGVSGLRERRQPASVERSAGSEG) is disordered. One can recognise a TRAM domain in the interval 29 to 90 (ERSAGSEGRR…KRFDEAHVSE (62 aa)). Cysteine 103, cysteine 109, cysteine 112, and cysteine 189 together coordinate [4Fe-4S] cluster. 6 residues coordinate S-adenosyl-L-methionine: glutamine 298, phenylalanine 332, asparagine 337, glutamate 353, aspartate 379, and aspartate 401. The Nucleophile role is filled by cysteine 427.

Belongs to the class I-like SAM-binding methyltransferase superfamily. RNA M5U methyltransferase family. RlmD subfamily.

The enzyme catalyses uridine(1939) in 23S rRNA + S-adenosyl-L-methionine = 5-methyluridine(1939) in 23S rRNA + S-adenosyl-L-homocysteine + H(+). Functionally, catalyzes the formation of 5-methyl-uridine at position 1939 (m5U1939) in 23S rRNA. This chain is 23S rRNA (uracil(1939)-C(5))-methyltransferase RlmD, found in Halomonas elongata (strain ATCC 33173 / DSM 2581 / NBRC 15536 / NCIMB 2198 / 1H9).